Consider the following 542-residue polypeptide: DM7 family protein CG15333 (542 aa).

It belongs to the DM7 family.

This Drosophila melanogaster (Fruit fly) protein is DM7 family protein CG15333.